The sequence spans 895 residues: Putative endoplasmic reticulum metallopeptidase 1-B (895 aa).

Residues 1 to 27 (MSTGIRRRHADEKKNILEKESLQNDET) are disordered. The Cytoplasmic segment spans residues 1 to 39 (MSTGIRRRHADEKKNILEKESLQNDETQREMEKDISLLR). A compositionally biased stretch (basic and acidic residues) spans 9 to 27 (HADEKKNILEKESLQNDET). The helical transmembrane segment at 40–60 (PAHWNFIGLFFLVLIIGTTFL) threads the bilayer. At 61-374 (HKCLPEPKDP…KPAEYADRKT (314 aa)) the chain is on the lumenal side. A glycan (N-linked (GlcNAc...) asparagine) is linked at Asn156. Residues His180 and Asp192 each contribute to the Zn(2+) site. Catalysis depends on Glu226, which acts as the Proton acceptor. The Zn(2+) site is built by Glu227, Glu253, and His329. The chain crosses the membrane as a helical span at residues 375 to 395 (VFFDFLGLFVIIYPLSIAHLV). At 396–424 (NMLTICTVIALMSHRFYSKTFITFLALRD) the chain is on the cytoplasmic side. The helical transmembrane segment at 425-445 (YVLTILTIALVLKAMTFMSLF) threads the bilayer. Over 446-457 (TYGALRWYTRHW) the chain is Lumenal. Residues 458–478 (LALVAYGLPSVWAGISVQGLL) form a helical membrane-spanning segment. At 479–489 (TARLAPKAREE) the chain is on the cytoplasmic side. A helical membrane pass occupies residues 490–512 (YGSTLELIHLTLISGILLAFTYY). Residues 513–515 (DIA) are Lumenal-facing. A helical membrane pass occupies residues 516-538 (SGFLFALLLVPAIKSIITYFGAW). Topologically, residues 539-553 (PTCPTFNTILTLILS) are cytoplasmic. The chain crosses the membrane as a helical span at residues 554–574 (FPGCAMAIYTTEMLLSIFIPI). Over 575–584 (MGRSSYNPEP) the chain is Lumenal. Residues 585 to 605 (AVSFFVAFSAGCIVLSLGGLV) traverse the membrane as a helical segment. Over 606-619 (AKSRNSRSSNEAGL) the chain is Cytoplasmic. The chain crosses the membrane as a helical span at residues 620-640 (LELIYNILGVLLVTLTILYVF). Residues 641–895 (SSFWPSPYRF…WNVDQVYKYF (255 aa)) lie on the Lumenal side of the membrane. Residues Asn679 and Asn796 are each glycosylated (N-linked (GlcNAc...) asparagine).

This sequence belongs to the peptidase M28 family. It depends on Zn(2+) as a cofactor.

The protein localises to the endoplasmic reticulum membrane. The protein is Putative endoplasmic reticulum metallopeptidase 1-B of Caenorhabditis elegans.